The following is a 934-amino-acid chain: Protein translocase subunit SecA (934 aa).

Residues Gln-87, 105–109, and Asp-515 each bind ATP; that span reads GEGKT. Residues Cys-918, Cys-920, Cys-929, and His-930 each contribute to the Zn(2+) site.

It belongs to the SecA family. Monomer and homodimer. Part of the essential Sec protein translocation apparatus which comprises SecA, SecYEG and auxiliary proteins SecDF-YajC and YidC. Requires Zn(2+) as cofactor.

It is found in the cell inner membrane. It localises to the cytoplasm. It catalyses the reaction ATP + H2O + cellular proteinSide 1 = ADP + phosphate + cellular proteinSide 2.. Functionally, part of the Sec protein translocase complex. Interacts with the SecYEG preprotein conducting channel. Has a central role in coupling the hydrolysis of ATP to the transfer of proteins into and across the cell membrane, serving both as a receptor for the preprotein-SecB complex and as an ATP-driven molecular motor driving the stepwise translocation of polypeptide chains across the membrane. In Ralstonia nicotianae (strain ATCC BAA-1114 / GMI1000) (Ralstonia solanacearum), this protein is Protein translocase subunit SecA.